The following is a 143-amino-acid chain: MFMGEYLHTIDGKGRLIVPARFREALGERFIATKGLDHCLFVYPLDEWKVLEEKLRALPFTQPEARAFVRFFFSGATECELDKQGRILLPANLREYAQLDKDAVLVGVSSRVEIWSQALWANYSRQAEDAYASAAESLVNLGI.

2 SpoVT-AbrB domains span residues 5-47 and 76-119; these read EYLH…PLDE and ATEC…SQAL.

The protein belongs to the MraZ family. Forms oligomers.

Its subcellular location is the cytoplasm. The protein localises to the nucleoid. This is Transcriptional regulator MraZ from Desulfitobacterium hafniense (strain DSM 10664 / DCB-2).